Reading from the N-terminus, the 347-residue chain is Protein RecA (347 aa).

65–72 (GPESSGKT) serves as a coordination point for ATP.

The protein belongs to the RecA family.

The protein localises to the cytoplasm. Can catalyze the hydrolysis of ATP in the presence of single-stranded DNA, the ATP-dependent uptake of single-stranded DNA by duplex DNA, and the ATP-dependent hybridization of homologous single-stranded DNAs. It interacts with LexA causing its activation and leading to its autocatalytic cleavage. This Aliivibrio salmonicida (strain LFI1238) (Vibrio salmonicida (strain LFI1238)) protein is Protein RecA.